A 437-amino-acid polypeptide reads, in one-letter code: Cysteine--tRNA ligase (437 aa).

Position 31 (Cys-31) interacts with Zn(2+). Positions 33–43 (PTVYNDLHLGN) match the 'HIGH' region motif. The Zn(2+) site is built by Cys-205, His-230, and Glu-234. Residues 262 to 266 (KMSKS) carry the 'KMSKS' region motif. Lys-265 is a binding site for ATP.

The protein belongs to the class-I aminoacyl-tRNA synthetase family. Monomer. Requires Zn(2+) as cofactor.

Its subcellular location is the cytoplasm. It catalyses the reaction tRNA(Cys) + L-cysteine + ATP = L-cysteinyl-tRNA(Cys) + AMP + diphosphate. The polypeptide is Cysteine--tRNA ligase (cysS) (Mycoplasma pneumoniae (strain ATCC 29342 / M129 / Subtype 1) (Mycoplasmoides pneumoniae)).